The primary structure comprises 309 residues: Aspartate carbamoyltransferase catalytic subunit (309 aa).

Residues arginine 55 and threonine 56 each contribute to the carbamoyl phosphate site. An L-aspartate-binding site is contributed by lysine 85. Arginine 106, histidine 135, and glutamine 138 together coordinate carbamoyl phosphate. Positions 168 and 230 each coordinate L-aspartate. Residues leucine 268 and proline 269 each coordinate carbamoyl phosphate.

The protein belongs to the aspartate/ornithine carbamoyltransferase superfamily. ATCase family. Heterododecamer (2C3:3R2) of six catalytic PyrB chains organized as two trimers (C3), and six regulatory PyrI chains organized as three dimers (R2).

The enzyme catalyses carbamoyl phosphate + L-aspartate = N-carbamoyl-L-aspartate + phosphate + H(+). It functions in the pathway pyrimidine metabolism; UMP biosynthesis via de novo pathway; (S)-dihydroorotate from bicarbonate: step 2/3. Its function is as follows. Catalyzes the condensation of carbamoyl phosphate and aspartate to form carbamoyl aspartate and inorganic phosphate, the committed step in the de novo pyrimidine nucleotide biosynthesis pathway. The chain is Aspartate carbamoyltransferase catalytic subunit from Aliivibrio fischeri (strain ATCC 700601 / ES114) (Vibrio fischeri).